Here is a 137-residue protein sequence, read N- to C-terminus: uncharacterized protein (137 aa).

This is an uncharacterized protein from Archaeoglobus fulgidus (strain ATCC 49558 / DSM 4304 / JCM 9628 / NBRC 100126 / VC-16).